We begin with the raw amino-acid sequence, 242 residues long: UPF0246 protein SPCG_1533 (242 aa).

This sequence belongs to the UPF0246 family.

The protein is UPF0246 protein SPCG_1533 of Streptococcus pneumoniae (strain CGSP14).